Here is a 332-residue protein sequence, read N- to C-terminus: Methionyl-tRNA formyltransferase (332 aa).

Position 124 to 127 (124 to 127) interacts with (6S)-5,6,7,8-tetrahydrofolate; sequence SLLP.

This sequence belongs to the Fmt family.

The catalysed reaction is L-methionyl-tRNA(fMet) + (6R)-10-formyltetrahydrofolate = N-formyl-L-methionyl-tRNA(fMet) + (6S)-5,6,7,8-tetrahydrofolate + H(+). In terms of biological role, attaches a formyl group to the free amino group of methionyl-tRNA(fMet). The formyl group appears to play a dual role in the initiator identity of N-formylmethionyl-tRNA by promoting its recognition by IF2 and preventing the misappropriation of this tRNA by the elongation apparatus. The protein is Methionyl-tRNA formyltransferase of Polynucleobacter asymbioticus (strain DSM 18221 / CIP 109841 / QLW-P1DMWA-1) (Polynucleobacter necessarius subsp. asymbioticus).